A 326-amino-acid polypeptide reads, in one-letter code: N-acetyl-gamma-glutamyl-phosphate reductase (326 aa).

C155 is an active-site residue.

Belongs to the NAGSA dehydrogenase family. Type 1 subfamily.

Its subcellular location is the cytoplasm. It catalyses the reaction N-acetyl-L-glutamate 5-semialdehyde + phosphate + NADP(+) = N-acetyl-L-glutamyl 5-phosphate + NADPH + H(+). It functions in the pathway amino-acid biosynthesis; L-arginine biosynthesis; N(2)-acetyl-L-ornithine from L-glutamate: step 3/4. Its function is as follows. Catalyzes the NADPH-dependent reduction of N-acetyl-5-glutamyl phosphate to yield N-acetyl-L-glutamate 5-semialdehyde. The sequence is that of N-acetyl-gamma-glutamyl-phosphate reductase from Shewanella loihica (strain ATCC BAA-1088 / PV-4).